Consider the following 373-residue polypeptide: MRSGILSKVKRIVIKIGSGVLTCGDNGLNKPLMGSIAAQVAELRASGRQVIIVSSGAVAAGRKELGIDGRPRSIPQKQAAAAIGQSRLMHAYEEAFEPFGHKVAQILLTRDDLAHRGRFLNARATLDTLLSFGVIPIINENDTVVFDEIKFGDNDSLSALVTNLAEANLLVILTDIDGFYEANPRTNPDARLIPLVRQITREMERAAGGSGSTVGTGGMVTKLAAAKKAGQFGVPTLMLNGRNPSLLAEAFAGREVGTLFLPGKESLNRRKHWIAHTLRPSGKIIVDDGARTVLARQGKSLLPSGVVRVEGKFDRGACVRVCGTDGTEIARGLVDYSHDEITRILGHRSGEIEAILGYKYGDEIIHRDNLVVL.

Residue Lys-15 coordinates ATP. The substrate site is built by Ser-55, Asp-142, and Asn-154. ATP is bound by residues 174–175 and 216–222; these read TD and TGGMVTK. The region spanning 281 to 359 is the PUA domain; the sequence is SGKIIVDDGA…GEIEAILGYK (79 aa).

Belongs to the glutamate 5-kinase family.

Its subcellular location is the cytoplasm. The catalysed reaction is L-glutamate + ATP = L-glutamyl 5-phosphate + ADP. The protein operates within amino-acid biosynthesis; L-proline biosynthesis; L-glutamate 5-semialdehyde from L-glutamate: step 1/2. Functionally, catalyzes the transfer of a phosphate group to glutamate to form L-glutamate 5-phosphate. The protein is Glutamate 5-kinase of Geobacter sulfurreducens (strain ATCC 51573 / DSM 12127 / PCA).